A 196-amino-acid polypeptide reads, in one-letter code: T-cell surface glycoprotein CD3 epsilon chain (196 aa).

Residues 1-21 form the signal peptide; that stretch reads MPSGNLWKVLGLCLLSVGAWG. Residues 22 to 116 lie on the Extracellular side of the membrane; the sequence is QEDIERPDED…VCENCVEVDL (95 aa). One can recognise an Ig-like domain in the interval 28–102; sequence PDEDTQKTFK…VGEKTSHRLY (75 aa). Cys-49 and Cys-91 are joined by a disulfide. A helical membrane pass occupies residues 117–137; sequence MAVVTIIVVDICITLGLLMVV. Residues 138–196 are Cytoplasmic-facing; sequence YYYSKSRKAKAMPVTRGAGAGGRPRGQNRERPPPVPNPDYEPIRKGQRDLYSGLNQRGR. The segment at 150–196 is disordered; the sequence is PVTRGAGAGGRPRGQNRERPPPVPNPDYEPIRKGQRDLYSGLNQRGR. The tract at residues 164 to 181 is NUMB-binding region; the sequence is QNRERPPPVPNPDYEPIR. The ITAM domain occupies 167–194; that stretch reads ERPPPVPNPDYEPIRKGQRDLYSGLNQR. The tract at residues 168–175 is proline-rich sequence; it reads RPPPVPNP. 2 positions are modified to phosphotyrosine: Tyr-177 and Tyr-188.

As to quaternary structure, the TCR-CD3 complex is composed of a CD3D/CD3E and a CD3G/CD3E heterodimers that preferentially associate with TCRalpha and TCRbeta, respectively, to form TCRalpha/CD3E/CD3G and TCRbeta/CD3G/CD3E trimers. In turn, the hexamer interacts with CD3Z homodimer to form the TCR-CD3 complex. Alternatively, TCRalpha and TCRbeta can be replaced by TCRgamma and TCRdelta. Interacts with CD6. Interacts (via Proline-rich sequence) with NCK1; the interaction is ligand dependent but independent of tyrosine kinase activation. Phosphorylated on Tyr residues after T-cell receptor triggering by LCK in association with CD4/CD8.

It is found in the cell membrane. In terms of biological role, part of the TCR-CD3 complex present on T-lymphocyte cell surface that plays an essential role in adaptive immune response. When antigen presenting cells (APCs) activate T-cell receptor (TCR), TCR-mediated signals are transmitted across the cell membrane by the CD3 chains CD3D, CD3E, CD3G and CD3Z. All CD3 chains contain immunoreceptor tyrosine-based activation motifs (ITAMs) in their cytoplasmic domain. Upon TCR engagement, these motifs become phosphorylated by Src family protein tyrosine kinases LCK and FYN, resulting in the activation of downstream signaling pathways. In addition of this role of signal transduction in T-cell activation, CD3E plays an essential role in correct T-cell development. Also participates in internalization and cell surface down-regulation of TCR-CD3 complexes via endocytosis sequences present in CD3E cytosolic region. In addition to its role as a TCR coreceptor, it serves as a receptor for ITPRIPL1. Ligand recognition inhibits T-cell activation by promoting interaction with NCK1, which prevents CD3E-ZAP70 interaction and blocks the ERK-NFkB signaling cascade and calcium influx. The sequence is that of T-cell surface glycoprotein CD3 epsilon chain (CD3E) from Sus scrofa (Pig).